Reading from the N-terminus, the 305-residue chain is Energy-coupling factor transporter ATP-binding protein EcfA2 (305 aa).

Residues 13–262 (LQNVDITFTN…KNLLQELLIE (250 aa)) form the ABC transporter domain. 55–62 (GSTGSGKS) is a binding site for ATP.

This sequence belongs to the ABC transporter superfamily. Energy-coupling factor EcfA family. As to quaternary structure, forms a stable energy-coupling factor (ECF) transporter complex composed of 2 membrane-embedded substrate-binding proteins (S component), 2 ATP-binding proteins (A component) and 2 transmembrane proteins (T component).

It localises to the cell membrane. Its function is as follows. ATP-binding (A) component of a common energy-coupling factor (ECF) ABC-transporter complex. Unlike classic ABC transporters this ECF transporter provides the energy necessary to transport a number of different substrates. The polypeptide is Energy-coupling factor transporter ATP-binding protein EcfA2 (Spiroplasma kunkelii).